The primary structure comprises 366 residues: Nucleoporin SEH1 (366 aa).

WD repeat units follow at residues 18–57, 63–104, 111–152, 161–209, 226–267, and 290–329; these read AHRD…NWRR, CHGG…TEKD, QWIR…RIYE, RWNL…VIYE, DMPC…TAIL, and GDQR…QWVK.

This sequence belongs to the WD repeat SEC13 family. Component of the nuclear pore complex (NPC). Probably part of the GATOR complex.

It is found in the nucleus. The protein localises to the nuclear pore complex. The protein resides in the lysosome membrane. In terms of biological role, probable component of the nuclear pore complex (NPC) which is involved in the trafficking of macromolecules between the cytoplasm and nucleus. Its function is as follows. As a component of the GATOR complex may function in the amino acid-sensing branch of the TORC1 signaling pathway. The polypeptide is Nucleoporin SEH1 (Caenorhabditis briggsae).